We begin with the raw amino-acid sequence, 374 residues long: UDP-N-acetylglucosamine--N-acetylmuramyl-(pentapeptide) pyrophosphoryl-undecaprenol N-acetylglucosamine transferase (374 aa).

UDP-N-acetyl-alpha-D-glucosamine contacts are provided by residues 13–15 (TGG), asparagine 124, arginine 165, serine 193, and glutamine 294.

This sequence belongs to the glycosyltransferase 28 family. MurG subfamily.

The protein resides in the cell inner membrane. The enzyme catalyses di-trans,octa-cis-undecaprenyl diphospho-N-acetyl-alpha-D-muramoyl-L-alanyl-D-glutamyl-meso-2,6-diaminopimeloyl-D-alanyl-D-alanine + UDP-N-acetyl-alpha-D-glucosamine = di-trans,octa-cis-undecaprenyl diphospho-[N-acetyl-alpha-D-glucosaminyl-(1-&gt;4)]-N-acetyl-alpha-D-muramoyl-L-alanyl-D-glutamyl-meso-2,6-diaminopimeloyl-D-alanyl-D-alanine + UDP + H(+). It participates in cell wall biogenesis; peptidoglycan biosynthesis. Cell wall formation. Catalyzes the transfer of a GlcNAc subunit on undecaprenyl-pyrophosphoryl-MurNAc-pentapeptide (lipid intermediate I) to form undecaprenyl-pyrophosphoryl-MurNAc-(pentapeptide)GlcNAc (lipid intermediate II). This is UDP-N-acetylglucosamine--N-acetylmuramyl-(pentapeptide) pyrophosphoryl-undecaprenol N-acetylglucosamine transferase from Rhizobium johnstonii (strain DSM 114642 / LMG 32736 / 3841) (Rhizobium leguminosarum bv. viciae).